The chain runs to 530 residues: T-complex protein 1 subunit gamma (530 aa).

The protein belongs to the TCP-1 chaperonin family. In terms of assembly, heterooligomeric complex of about 850 to 900 kDa that forms two stacked rings, 12 to 16 nm in diameter.

It is found in the cytoplasm. In terms of biological role, molecular chaperone; assists the folding of proteins upon ATP hydrolysis. Known to play a role, in vitro, in the folding of actin and tubulin. This chain is T-complex protein 1 subunit gamma (cct3), found in Dictyostelium discoideum (Social amoeba).